The sequence spans 448 residues: UDP-N-acetylmuramoylalanine--D-glutamate ligase (448 aa).

112–118 (GSNAKST) contributes to the ATP binding site.

It belongs to the MurCDEF family.

It localises to the cytoplasm. It catalyses the reaction UDP-N-acetyl-alpha-D-muramoyl-L-alanine + D-glutamate + ATP = UDP-N-acetyl-alpha-D-muramoyl-L-alanyl-D-glutamate + ADP + phosphate + H(+). It functions in the pathway cell wall biogenesis; peptidoglycan biosynthesis. In terms of biological role, cell wall formation. Catalyzes the addition of glutamate to the nucleotide precursor UDP-N-acetylmuramoyl-L-alanine (UMA). This is UDP-N-acetylmuramoylalanine--D-glutamate ligase from Acinetobacter baylyi (strain ATCC 33305 / BD413 / ADP1).